We begin with the raw amino-acid sequence, 250 residues long: Probable replication-associated protein repA2 (250 aa).

It belongs to the IncFII RepA family.

In terms of biological role, this protein is essential for plasmid replication; it is involved in copy control functions. This chain is Probable replication-associated protein repA2 (repA2), found in Buchnera aphidicola subsp. Acyrthosiphon pisum (strain APS) (Acyrthosiphon pisum symbiotic bacterium).